Consider the following 568-residue polypeptide: Hexose transporter 1 (568 aa).

Residues 1 to 32 are Cytoplasmic-facing; the sequence is MATEEMREKSLKREAESLWDIPPESYASKACS. The chain crosses the membrane as a helical span at residues 33-53; the sequence is CMGTAAQLVMVAVLGSFQFGF. At 54-86 the chain is on the extracellular side; sequence NLSALNTSKAFIILDFGWCKDENGGHYSDCDTG. A disulfide bridge links Cys-72 with Cys-83. A helical transmembrane segment spans residues 87-107; sequence LVYGSLINTAVFLGACVGCLL. Over 108–119 the chain is Cytoplasmic; sequence GGRLTDFGRRAS. A helical transmembrane segment spans residues 120 to 140; the sequence is LIFTHCVCTLGCILSAAAEGF. Topologically, residues 141–142 are extracellular; the sequence is PT. Residues 143 to 163 traverse the membrane as a helical segment; the sequence is LLIARLVVGVAVGMFTVCVPM. The Cytoplasmic segment spans residues 164 to 182; the sequence is YLSEVTPDDRRGYFGTFHQ. An alpha-D-glucose-binding site is contributed by Gln-182. Residue Gln-182 coordinates beta-D-glucose. A helical membrane pass occupies residues 183–203; the sequence is LFITLGIFFGTLLGLAFGNAP. Residues 204 to 220 lie on the Extracellular side of the membrane; sequence AGDEVYEVSTFQQAWWR. The helical transmembrane segment at 221–241 threads the bilayer; it reads VMLGLPAVVSLLAIWLLWFVF. Over 242–306 the chain is Cytoplasmic; sequence PFETPQYMVE…KAIVHPTYRS (65 aa). A helical transmembrane segment spans residues 307-327; sequence VILLACLLSIMQQFTGINVLV. 3 residues coordinate alpha-D-glucose: Gln-318, Gln-319, and Asn-324. Residue Gln-318 participates in beta-D-glucose binding. Residue Asn-324 coordinates beta-D-glucose. At 328 to 345 the chain is on the extracellular side; it reads ANSNNLYSSLKLPQDAVT. Residues 346–366 form a helical membrane-spanning segment; that stretch reads GLTVGFTALNVFLTVITIPLV. Residue Asn-355 participates in beta-D-glucose binding. The Cytoplasmic portion of the chain corresponds to 367-374; it reads DRLGRRTL. A helical transmembrane segment spans residues 375-395; the sequence is LLFSEAVMFVAMGIAFVANLV. The Extracellular portion of the chain corresponds to 396 to 406; it reads DQSNTAVQWVT. Residues 407–427 form a helical membrane-spanning segment; it reads VACVYVFIVGFAVGYGPVLWI. Trp-426 lines the alpha-D-glucose pocket. The Cytoplasmic segment spans residues 428–443; it reads YIHEIFPPEIKQGAAS. The chain crosses the membrane as a helical span at residues 444-464; that stretch reads LASALNWVATVAIVLPSDFLL. The Extracellular segment spans residues 465 to 469; sequence KQGFS. A helical transmembrane segment spans residues 470-490; the sequence is VFVGICTVALAIIFVVTFIFV. Residues 491-568 lie on the Cytoplasmic side of the membrane; it reads KETKGLSIEE…DDLTKGTEVV (78 aa).

It belongs to the major facilitator superfamily. Sugar transporter (TC 2.A.1.1) family. As to quaternary structure, homodimer.

Its subcellular location is the cell membrane. It carries out the reaction D-glucose(out) = D-glucose(in). It catalyses the reaction D-fructose(out) = D-fructose(in). The catalysed reaction is D-galactose(in) = D-galactose(out). The enzyme catalyses D-mannose(out) = D-mannose(in). It carries out the reaction D-glucosamine(out) = D-glucosamine(in). It catalyses the reaction D-xylose(out) = D-xylose(in). With respect to regulation, inhibited by cytochalasin B. Sodium-independent facilitative hexose transporter. Can transport D-glucose and D-mannose with high affinity, and D-fructose and D-galactose with low affinity. Can transport D-xylose and D-glucosamine. This chain is Hexose transporter 1, found in Toxoplasma gondii.